We begin with the raw amino-acid sequence, 160 residues long: Protein Bel-3 (160 aa).

In terms of assembly, homodimer.

Its subcellular location is the host cytoplasm. The polypeptide is Protein Bel-3 (bel3) (Human spumaretrovirus (SFVcpz(hu))).